We begin with the raw amino-acid sequence, 1396 residues long: Probable ATP-dependent RNA helicase spindle-E (1396 aa).

The segment at 1–34 (MDEAAGPSTSRTSNLEDVDDEGASLAEEDEEHTK) is disordered. Residues 16–30 (EDVDDEGASLAEEDE) are compositionally biased toward acidic residues. A Helicase ATP-binding domain is found at 68-234 (LDKIRSNAVV…FKIPKKSGYL (167 aa)). 81-88 (GATGCGKT) contacts ATP. A DEAH box motif is present at residues 180-183 (DEVH). Residues 292-468 (KGQEFGDSLE…TVVLKAKLLE (177 aa)) enclose the Helicase C-terminal domain. Residues 885-950 (NFAMGQMVAA…RQLDDSLGQL (66 aa)) enclose the Tudor domain.

This sequence belongs to the DEAD box helicase family. DEAH subfamily.

The protein resides in the cytoplasm. It carries out the reaction ATP + H2O = ADP + phosphate + H(+). In terms of biological role, probable ATP-binding RNA helicase which plays a central role during gametogenesis by repressing transposable elements and preventing their mobilization, which is essential for the germline integrity. Acts via the piRNA metabolic process, which mediates the repression of transposable elements during meiosis by forming complexes composed of piRNAs and Piwi proteins and govern the methylation and subsequent repression of transposons. The protein is Probable ATP-dependent RNA helicase spindle-E (spn-E) of Culex quinquefasciatus (Southern house mosquito).